The chain runs to 439 residues: 26S proteasome regulatory subunit 4 homolog (439 aa).

The segment at 1-46 is disordered; the sequence is MGNNQSQGQGDKGEKKDQPKYQPPPPPTQFGKKKKRRGAETSTKLP. Position 225 to 232 (225 to 232) interacts with ATP; it reads GEPGTGKT.

This sequence belongs to the AAA ATPase family.

The protein localises to the cytoplasm. Its subcellular location is the nucleus. In terms of biological role, the 26S proteasome is involved in the ATP-dependent degradation of ubiquitinated proteins. The regulatory (or ATPase) complex confers ATP dependency and substrate specificity to the 26S complex. Plays an important role in regulating both growth and multicellular development. The polypeptide is 26S proteasome regulatory subunit 4 homolog (psmC1) (Dictyostelium discoideum (Social amoeba)).